The following is a 268-amino-acid chain: Calpain small subunit 1 (268 aa).

N-acetylmethionine is present on methionine 1. The residue at position 6 (serine 6) is a Phosphoserine. The EF-hand 1; atypical domain maps to 96–130; it reads EEVRQFRKLFVQLAGDDMEVSATELMNILNKVVTR. Positions 109, 112, 114, 119, 137, 152, 154, 156, 158, and 163 each coordinate Ca(2+). EF-hand domains lie at 139-172, 169-204, 205-233, and 234-268; these read FGID…NNIK, NNIK…AGFH, LNEH…ISCL, and VRLD…TMYS. Lysine 179 carries the post-translational modification N6-acetyllysine. Ca(2+) contacts are provided by aspartate 182, aspartate 184, serine 186, threonine 188, glutamate 193, and aspartate 225.

Homodimer or heterodimer of a large (catalytic) and a small (regulatory) subunit. In presence of calcium, the heterodimer dissociates.

It localises to the cytoplasm. The protein localises to the cell membrane. In terms of biological role, regulatory subunit of the calcium-regulated non-lysosomal thiol-protease which catalyzes limited proteolysis of substrates involved in cytoskeletal remodeling and signal transduction. Essential for embryonic development. The protein is Calpain small subunit 1 (Capns1) of Mus musculus (Mouse).